The sequence spans 449 residues: UDP-glycosyltransferase 76E7 (449 aa).

UDP-alpha-D-glucose contacts are provided by residues S275, 333-335 (APQ), 350-358 (HCGWNSTLE), and 372-375 (TTDQ).

Belongs to the UDP-glycosyltransferase family.

The polypeptide is UDP-glycosyltransferase 76E7 (UGT76E7) (Arabidopsis thaliana (Mouse-ear cress)).